A 704-amino-acid polypeptide reads, in one-letter code: Metabotropic glutamate receptor-like protein K (704 aa).

The first 21 residues, 1–21, serve as a signal peptide directing secretion; that stretch reads MIKLILSIILIICFIINSIES. The Extracellular segment spans residues 22 to 383; it reads FKMITLTTGP…SKVEFQRSIQ (362 aa). N66, N104, N256, N286, N308, N337, N343, and N368 each carry an N-linked (GlcNAc...) asparagine glycan. A helical transmembrane segment spans residues 384–404; the sequence is IGFSIVSGLLIGFVILMMIGI. Topologically, residues 405–419 are cytoplasmic; sequence VKYQDTPSIRSASPS. A helical transmembrane segment spans residues 420–440; sequence FLNLTLLGGVIIFIGIIVWVA. At 441-455 the chain is on the extracellular side; that stretch reads PISTHQCNARFWLVT. Residues 456–476 traverse the membrane as a helical segment; it reads IGFSTLIGSLVVKNIRIWLIF. Residues 477-492 lie on the Cytoplasmic side of the membrane; that stretch reads DNPELKIRTITNNQLY. Residues 493–513 traverse the membrane as a helical segment; it reads PWVGLCLVINIVLMSIITTVG. The Extracellular segment spans residues 514–541; sequence DLKAIEAQGIDSLGKFEYMTICKMNYTG. Residue N538 is glycosylated (N-linked (GlcNAc...) asparagine). The chain crosses the membrane as a helical span at residues 542-562; that stretch reads AATLYSILAYFGTLLLVGVFV. The Cytoplasmic portion of the chain corresponds to 563-578; that stretch reads SWKIRIVHIEEFSECT. A helical membrane pass occupies residues 579–599; the sequence is AIAKTLYSISFCLFVIVPLMI. Residues 600–608 lie on the Extracellular side of the membrane; it reads SPQDKQSET. A helical membrane pass occupies residues 609-629; it reads IILCVTGIFITTGALLIFFLP. Residues 630 to 704 lie on the Cytoplasmic side of the membrane; the sequence is KFWRIFGNEK…NESSLSNETK (75 aa). 2 disordered regions span residues 657-677 and 685-704; these read ARAE…SKSS and SGIE…NETK.

This sequence in the N-terminal section; belongs to the BMP lipoprotein family. The protein in the C-terminal section; belongs to the G-protein coupled receptor 3 family. GABA-B receptor subfamily.

The protein localises to the membrane. The sequence is that of Metabotropic glutamate receptor-like protein K (grlK) from Dictyostelium discoideum (Social amoeba).